A 91-amino-acid polypeptide reads, in one-letter code: PqqA binding protein (91 aa).

The protein belongs to the PqqD family. As to quaternary structure, monomer. Interacts with PqqE.

It functions in the pathway cofactor biosynthesis; pyrroloquinoline quinone biosynthesis. Its function is as follows. Functions as a PqqA binding protein and presents PqqA to PqqE, in the pyrroloquinoline quinone (PQQ) biosynthetic pathway. The sequence is that of PqqA binding protein from Pseudomonas fluorescens (strain Pf0-1).